The primary structure comprises 138 residues: Small ribosomal subunit protein bS6 (138 aa).

Residues 94–138 (VKQDGPLPTPKPTSKEDETEKEEVKPTEDKTESPAQEEKKEDSKE) are disordered. The span at 106–138 (TSKEDETEKEEVKPTEDKTESPAQEEKKEDSKE) shows a compositional bias: basic and acidic residues.

Belongs to the bacterial ribosomal protein bS6 family.

Its function is as follows. Binds together with bS18 to 16S ribosomal RNA. This chain is Small ribosomal subunit protein bS6, found in Prochlorococcus marinus (strain NATL1A).